The chain runs to 388 residues: Norsolorinic acid reductase A (388 aa).

Position 69 (Asp-69) interacts with NADP(+). Tyr-74 acts as the Proton donor in catalysis. Position 148 (His-148) interacts with substrate. Residues 178–179 (SD), Gln-204, 233–243 (GVLGRGQFRSA), and 300–308 (RKVEHLKEN) each bind NADP(+).

It belongs to the aldo/keto reductase family. Aldo/keto reductase 2 subfamily.

The protein operates within mycotoxin biosynthesis; aflatoxin biosynthesis. In terms of biological role, norsolorinic acid reductase; part of the gene cluster that mediates the biosynthesis of aflatoxins, a group of polyketide-derived furanocoumarins, and part of the most toxic and carcinogenic compounds among the known mycotoxins. The four major aflatoxins produced by A.parasiticus are aflatoxin B1 (AFB1), aflatoxin B2 (AFB2), aflatoxin G1 (AFG1) and aflatoxin G2 (AFG2). Within the aflatoxin pathway, the norsolorinic acid reductase aflE may play a role in the conversion of norsolorinic acid (NOR) to averantin (AVN). The biosynthesis of aflatoxins begins with the norsolorinic acid synthase aflC that combines a hexanoyl starter unit produced by the fatty acid synthase aflA/aflB and 7 malonyl-CoA extender units to synthesize the precursor NOR. The second step is the conversion of NOR to averantin and requires the norsolorinic acid ketoreductase aflD, which catalyzes the dehydration of norsolorinic acid to form (1'S)-averantin. The norsolorinic acid reductases aflE and aflF may also play a role in the conversion of NOR to AVN. The cytochrome P450 monooxygenase aflG then catalyzes the hydroxylation of AVN to 5'hydroxyaverantin (HAVN). The next step is performed by the 5'-hydroxyaverantin dehydrogenase aflH that transforms HAVN to 5'-oxoaverantin (OAVN) which is further converted to averufin (AVF) by aflK that plays a dual role in the pathway, as a 5'-oxoaverantin cyclase that mediates conversion of 5'-oxoaverantin, as well as a versicolorin B synthase in a later step in the pathway. The averufin oxidase aflI catalyzes the conversion of AVF to versiconal hemiacetal acetate (VHA). VHA is then the substrate for the versiconal hemiacetal acetate esterase aflJ to yield versiconal (VAL). Versicolorin B synthase aflK then converts VAL to versicolorin B (VERB) by closing the bisfuran ring of aflatoxin which is required for DNA-binding, thus giving to aflatoxin its activity as a mutagen. Then, the activity of the versicolorin B desaturase aflL leads to versicolorin A (VERA). A branch point starts from VERB since it can also be converted to dihydrodemethylsterigmatocystin (DMDHST), probably also by aflL, VERA being a precursor for aflatoxins B1 and G1, and DMDHST for aflatoxins B2 and G2. Next, the versicolorin reductase aflM and the cytochrome P450 monooxygenase aflN are involved in conversion of VERA to demethylsterigmatocystin (DMST). AflX and aflY seem also involved in this step, through probable aflX-mediated epoxide ring-opening step following versicolorin A oxidation and aflY-mediated Baeyer-Villiger oxidation required for the formation of the xanthone ring. The methyltransferase aflO then leads to the modification of DMST to sterigmatocystin (ST), and of DMDHST to dihydrosterigmatocystin (DHST). Both ST and DHST are then substrates of the O-methyltransferase aflP to yield O-methylsterigmatocystin (OMST) and dihydro-O-methylsterigmatocystin (DHOMST), respectively. Finally OMST is converted to aflatoxins B1 and G1, and DHOMST to aflatoxins B2 and G2, via the action of several enzymes including O-methylsterigmatocystin oxidoreductase aflQ, the cytochrome P450 monooxygenase aflU, but also the NADH-dependent flavin oxidoreductase nadA which is specifically required for the synthesis of AFG1. The chain is Norsolorinic acid reductase A from Aspergillus parasiticus (strain ATCC 56775 / NRRL 5862 / SRRC 143 / SU-1).